Reading from the N-terminus, the 499-residue chain is Chaperone SurA (499 aa).

An N-terminal signal peptide occupies residues M1–A36. 2 PpiC domains span residues P231–A333 and I352–N450.

Its subcellular location is the periplasm. It carries out the reaction [protein]-peptidylproline (omega=180) = [protein]-peptidylproline (omega=0). Chaperone involved in the correct folding and assembly of outer membrane proteins. Recognizes specific patterns of aromatic residues and the orientation of their side chains, which are found more frequently in integral outer membrane proteins. May act in both early periplasmic and late outer membrane-associated steps of protein maturation. This Cupriavidus pinatubonensis (strain JMP 134 / LMG 1197) (Cupriavidus necator (strain JMP 134)) protein is Chaperone SurA.